Consider the following 122-residue polypeptide: Ribosomal protein eL22-like (122 aa).

Phosphoserine occurs at positions 112, 118, and 120.

It belongs to the eukaryotic ribosomal protein eL22 family.

In Homo sapiens (Human), this protein is Ribosomal protein eL22-like (RPL22L1).